A 42-amino-acid chain; its full sequence is Photosystem I reaction center subunit IX (42 aa).

A helical transmembrane segment spans residues 7-27 (YLSVAPVLSTLWFGALAGLLI).

It belongs to the PsaJ family.

It localises to the plastid. Its subcellular location is the chloroplast thylakoid membrane. In terms of biological role, may help in the organization of the PsaE and PsaF subunits. The sequence is that of Photosystem I reaction center subunit IX from Platanus occidentalis (Sycamore).